A 403-amino-acid chain; its full sequence is S-adenosylmethionine synthase (403 aa).

An ATP-binding site is contributed by His17. Asp19 is a binding site for Mg(2+). Glu45 is a K(+) binding site. Glu58 and Gln104 together coordinate L-methionine. The tract at residues 104 to 114 is flexible loop; sequence QSPDIAQGVDT. ATP contacts are provided by residues 179–181, 250–251, Asp259, 265–266, Ala282, and Lys286; these read DGK, KF, and RK. Asp259 is an L-methionine binding site. Lys290 is a binding site for L-methionine.

It belongs to the AdoMet synthase family. Homotetramer; dimer of dimers. Mg(2+) is required as a cofactor. K(+) serves as cofactor.

The protein resides in the cytoplasm. It carries out the reaction L-methionine + ATP + H2O = S-adenosyl-L-methionine + phosphate + diphosphate. It functions in the pathway amino-acid biosynthesis; S-adenosyl-L-methionine biosynthesis; S-adenosyl-L-methionine from L-methionine: step 1/1. Its function is as follows. Catalyzes the formation of S-adenosylmethionine (AdoMet) from methionine and ATP. The overall synthetic reaction is composed of two sequential steps, AdoMet formation and the subsequent tripolyphosphate hydrolysis which occurs prior to release of AdoMet from the enzyme. This Mycobacterium tuberculosis (strain ATCC 25177 / H37Ra) protein is S-adenosylmethionine synthase.